Here is a 373-residue protein sequence, read N- to C-terminus: Glutamate 5-kinase (373 aa).

Residue lysine 15 coordinates ATP. Substrate contacts are provided by serine 55, aspartate 142, and asparagine 154. ATP-binding positions include 174–175 and 216–222; these read TD and TGGMVTK. Residues 281-359 enclose the PUA domain; that stretch reads SGKIIVDDGA…GEIEAILGYK (79 aa).

This sequence belongs to the glutamate 5-kinase family.

The protein localises to the cytoplasm. The enzyme catalyses L-glutamate + ATP = L-glutamyl 5-phosphate + ADP. It functions in the pathway amino-acid biosynthesis; L-proline biosynthesis; L-glutamate 5-semialdehyde from L-glutamate: step 1/2. Catalyzes the transfer of a phosphate group to glutamate to form L-glutamate 5-phosphate. The protein is Glutamate 5-kinase of Geobacter sulfurreducens (strain ATCC 51573 / DSM 12127 / PCA).